A 221-amino-acid chain; its full sequence is Thiopurine S-methyltransferase (221 aa).

Positions 12, 47, 68, and 125 each coordinate S-adenosyl-L-methionine.

Belongs to the class I-like SAM-binding methyltransferase superfamily. TPMT family.

It is found in the cytoplasm. The catalysed reaction is S-adenosyl-L-methionine + a thiopurine = S-adenosyl-L-homocysteine + a thiopurine S-methylether.. The sequence is that of Thiopurine S-methyltransferase from Legionella pneumophila (strain Paris).